A 251-amino-acid chain; its full sequence is Triosephosphate isomerase (251 aa).

Residue 9–11 coordinates substrate; that stretch reads NWK. H95 acts as the Electrophile in catalysis. The Proton acceptor role is filled by E167. Residues G173, S213, and 234–235 contribute to the substrate site; that span reads GG. S213 carries the phosphoserine modification.

This sequence belongs to the triosephosphate isomerase family. As to quaternary structure, homodimer.

The protein localises to the cytoplasm. It carries out the reaction D-glyceraldehyde 3-phosphate = dihydroxyacetone phosphate. It participates in carbohydrate biosynthesis; gluconeogenesis. The protein operates within carbohydrate degradation; glycolysis; D-glyceraldehyde 3-phosphate from glycerone phosphate: step 1/1. Functionally, involved in the gluconeogenesis. Catalyzes stereospecifically the conversion of dihydroxyacetone phosphate (DHAP) to D-glyceraldehyde-3-phosphate (G3P). The protein is Triosephosphate isomerase of Anoxybacillus flavithermus (strain DSM 21510 / WK1).